The chain runs to 120 residues: Large ribosomal subunit protein uL18 (120 aa).

The protein belongs to the universal ribosomal protein uL18 family. Part of the 50S ribosomal subunit; part of the 5S rRNA/L5/L18/L25 subcomplex. Contacts the 5S and 23S rRNAs.

In terms of biological role, this is one of the proteins that bind and probably mediate the attachment of the 5S RNA into the large ribosomal subunit, where it forms part of the central protuberance. This chain is Large ribosomal subunit protein uL18, found in Rhodospirillum rubrum (strain ATCC 11170 / ATH 1.1.1 / DSM 467 / LMG 4362 / NCIMB 8255 / S1).